The chain runs to 147 residues: Anti-sigma F factor (147 aa).

The protein belongs to the anti-sigma-factor family.

The enzyme catalyses L-seryl-[protein] + ATP = O-phospho-L-seryl-[protein] + ADP + H(+). The catalysed reaction is L-threonyl-[protein] + ATP = O-phospho-L-threonyl-[protein] + ADP + H(+). Functionally, binds to sigma F and blocks its ability to form an RNA polymerase holoenzyme (E-sigma F). Phosphorylates SpoIIAA on a serine residue. This phosphorylation may enable SpoIIAA to act as an anti-anti-sigma factor that counteracts SpoIIAB and thus releases sigma F from inhibition. The chain is Anti-sigma F factor from Priestia megaterium (Bacillus megaterium).